An 873-amino-acid chain; its full sequence is Mitogen-activated protein kinase kinase kinase kinase 3 (873 aa).

N-acetylmethionine is present on M1. The region spanning 16–273 is the Protein kinase domain; the sequence is FELIQRIGSG…AEKLLQHPFV (258 aa). ATP is bound by residues 22-30 and K45; that span reads IGSGTYGDV. The active-site Proton acceptor is D136. Phosphoserine occurs at positions 329 and 377. Residues 389-518 are disordered; that stretch reads AHLEDDEGDD…KPISNGLPPT (130 aa). A compositionally biased stretch (pro residues) spans 452–466; the sequence is HVPPRPPPPRLPPQK. Residues 487–499 are compositionally biased toward polar residues; it reads VHQQQSEQRGTNL. The 312-residue stretch at 535-846 folds into the CNH domain; the sequence is PLKIHCATSW…IFRLLGSDRV (312 aa).

The protein belongs to the protein kinase superfamily. STE Ser/Thr protein kinase family. STE20 subfamily. In terms of assembly, interacts with SH3GL2. Interaction appears to regulate MAP4K3-mediated JNK activation. Mg(2+) is required as a cofactor.

The catalysed reaction is L-seryl-[protein] + ATP = O-phospho-L-seryl-[protein] + ADP + H(+). It catalyses the reaction L-threonyl-[protein] + ATP = O-phospho-L-threonyl-[protein] + ADP + H(+). Serine/threonine kinase that plays a role in the response to environmental stress. Appears to act upstream of the JUN N-terminal pathway. Activator of the Hippo signaling pathway which plays a pivotal role in organ size control and tumor suppression by restricting proliferation and promoting apoptosis. MAP4Ks act in parallel to and are partially redundant with STK3/MST2 and STK4/MST2 in the phosphorylation and activation of LATS1/2, and establish MAP4Ks as components of the expanded Hippo pathway. The sequence is that of Mitogen-activated protein kinase kinase kinase kinase 3 (Map4k3) from Rattus norvegicus (Rat).